Here is a 327-residue protein sequence, read N- to C-terminus: Ran-specific GTPase-activating protein 2 (327 aa).

2 disordered regions span residues 1 to 96 (MSET…KKED) and 109 to 205 (GFGV…KQEV). Residues 24–83 (PIDKLDGTPKRPREKDQDEQAEETSDKSEAPNKNDEEKKEEGKKDQEPSHKKIKVDDGKT) are compositionally biased toward basic and acidic residues. Thr31 bears the Phosphothreonine mark. The segment covering 122-133 (ATTSTESLPASD) has biased composition (polar residues). Low complexity predominate over residues 140–152 (FAFGSGLSFGSGF). Composition is skewed to basic and acidic residues over residues 157 to 179 (NKTENNSESEKKATDVDKDKVHS) and 189 to 205 (EDTKDKPKPLKLQKQEV). Ser179 bears the Phosphoserine mark. Positions 191-327 (TKDKPKPLKL…YNIIVKSVPK (137 aa)) constitute a RanBD1 domain.

In terms of assembly, interacts with GSP1, XPO1 and SRM1.

It is found in the nucleus. Important for the export of protein containing nuclear export signal (NES) out of the nucleus. Stimulates the GTPase activity of GSP1. This Saccharomyces cerevisiae (strain ATCC 204508 / S288c) (Baker's yeast) protein is Ran-specific GTPase-activating protein 2 (YRB2).